Here is a 434-residue protein sequence, read N- to C-terminus: Cullin-like protein 5 (434 aa).

A disordered region spans residues 1–34 (MKRSISPDPFSSTKSPKLVHHSPDDGGAEGNPYR).

It belongs to the cullin family.

The sequence is that of Cullin-like protein 5 from Arabidopsis thaliana (Mouse-ear cress).